The following is a 153-amino-acid chain: 6,7-dimethyl-8-ribityllumazine synthase (153 aa).

5-amino-6-(D-ribitylamino)uracil is bound by residues W22, 56 to 58 (SYE), and 80 to 82 (AVI). Residue 85–86 (AT) coordinates (2S)-2-hydroxy-3-oxobutyl phosphate. Catalysis depends on H88, which acts as the Proton donor. Position 113 (L113) interacts with 5-amino-6-(D-ribitylamino)uracil. R127 contributes to the (2S)-2-hydroxy-3-oxobutyl phosphate binding site.

It belongs to the DMRL synthase family.

It carries out the reaction (2S)-2-hydroxy-3-oxobutyl phosphate + 5-amino-6-(D-ribitylamino)uracil = 6,7-dimethyl-8-(1-D-ribityl)lumazine + phosphate + 2 H2O + H(+). It participates in cofactor biosynthesis; riboflavin biosynthesis; riboflavin from 2-hydroxy-3-oxobutyl phosphate and 5-amino-6-(D-ribitylamino)uracil: step 1/2. In terms of biological role, catalyzes the formation of 6,7-dimethyl-8-ribityllumazine by condensation of 5-amino-6-(D-ribitylamino)uracil with 3,4-dihydroxy-2-butanone 4-phosphate. This is the penultimate step in the biosynthesis of riboflavin. The chain is 6,7-dimethyl-8-ribityllumazine synthase from Herpetosiphon aurantiacus (strain ATCC 23779 / DSM 785 / 114-95).